Here is a 433-residue protein sequence, read N- to C-terminus: MRAEGDGGLERFCSPGKGRGLRALQPFQVGDLLFSCPAYAYVLTVNERGNHCEFCFARKEGLSKCGRCKQAFYCNVECQKEDWPMHKLECSPMVVFGENWNPSETVRLTARILAKQKIHPERTPSEKLLAVKEFESHLDKLDNEKRDLIQSDIAALHHFYSKHLEFPDSDSLVVLFAQVNCNGFTIEDEELSHLGSXIFPDVALMNHSCCPNVIVTYKGTLAEVRAVQEIHPGEEVFTSYIDLLYPTEDRNDRLRDSYFFTCECQECTTKDKDKAKVEIRKLNDPPKAEAIRDMVRYARNVIEEFRRAKHYKSPSELLEICELSQEKMSCVFEDSNVYMLHMMYQAMGVCLYMQDWEGALRYGQKIIQPYSKHYPLYSLNVASMWLKLGRLYMGLENKAAGERALRKAIAIMEVAHGKDHPYISEIKQEIESH.

The SET domain maps to 7–241 (GGLERFCSPG…PGEEVFTSYI (235 aa)). 17-19 (KGR) is an S-adenosyl-L-methionine binding site. Zn(2+)-binding residues include Cys52, Cys55, Cys65, Cys68, Cys74, Cys78, His86, and Cys90. The MYND-type zinc-finger motif lies at 52–90 (CEFCFARKEGLSKCGRCKQAFYCNVECQKEDWPMHKLEC). Residues His137, 206-207 (NH), and 258-260 (YFF) each bind S-adenosyl-L-methionine.

This sequence belongs to the class V-like SAM-binding methyltransferase superfamily. Interacts with RNA polymerase II and HELZ. Interacts with SIN3A and HDAC1. Interacts (via MYND-type zinc finger) with EPB41L3. Interacts (via SET domain) with p53/TP53. Interacts with RB1 and HSP90AA1.

It localises to the cytoplasm. Its subcellular location is the cytosol. The protein resides in the nucleus. The enzyme catalyses L-lysyl(4)-[histone H3] + 3 S-adenosyl-L-methionine = N(6),N(6),N(6)-trimethyl-L-lysyl(4)-[histone H3] + 3 S-adenosyl-L-homocysteine + 3 H(+). It catalyses the reaction L-lysyl-[protein] + S-adenosyl-L-methionine = N(6)-methyl-L-lysyl-[protein] + S-adenosyl-L-homocysteine + H(+). In terms of biological role, protein-lysine N-methyltransferase that methylates both histones and non-histone proteins, including p53/TP53 and RB1. Specifically trimethylates histone H3 'Lys-4' (H3K4me3) in vivo. The activity requires interaction with HSP90alpha. Shows even higher methyltransferase activity on p53/TP53. Monomethylates 'Lys-370' of p53/TP53, leading to decreased DNA-binding activity and subsequent transcriptional regulation activity of p53/TP53. Monomethylates RB1 at 'Lys-860'. In Sus scrofa (Pig), this protein is N-lysine methyltransferase SMYD2 (SMYD2).